The following is a 283-amino-acid chain: UPF0276 protein Anae109_1558 (283 aa).

Belongs to the UPF0276 family.

This is UPF0276 protein Anae109_1558 from Anaeromyxobacter sp. (strain Fw109-5).